The chain runs to 60 residues: Large ribosomal subunit protein uL30 (60 aa).

It belongs to the universal ribosomal protein uL30 family. As to quaternary structure, part of the 50S ribosomal subunit.

The sequence is that of Large ribosomal subunit protein uL30 from Agathobacter rectalis (strain ATCC 33656 / DSM 3377 / JCM 17463 / KCTC 5835 / VPI 0990) (Eubacterium rectale).